The following is a 303-amino-acid chain: Aspartate carbamoyltransferase catalytic subunit (303 aa).

Residues R51 and T52 each contribute to the carbamoyl phosphate site. K80 lines the L-aspartate pocket. 3 residues coordinate carbamoyl phosphate: R101, H129, and Q132. L-aspartate contacts are provided by R162 and R221. Carbamoyl phosphate contacts are provided by L260 and P261.

Belongs to the aspartate/ornithine carbamoyltransferase superfamily. ATCase family. Heterooligomer of catalytic and regulatory chains.

It catalyses the reaction carbamoyl phosphate + L-aspartate = N-carbamoyl-L-aspartate + phosphate + H(+). It participates in pyrimidine metabolism; UMP biosynthesis via de novo pathway; (S)-dihydroorotate from bicarbonate: step 2/3. In terms of biological role, catalyzes the condensation of carbamoyl phosphate and aspartate to form carbamoyl aspartate and inorganic phosphate, the committed step in the de novo pyrimidine nucleotide biosynthesis pathway. This chain is Aspartate carbamoyltransferase catalytic subunit, found in Saccharolobus solfataricus (strain ATCC 35092 / DSM 1617 / JCM 11322 / P2) (Sulfolobus solfataricus).